Here is a 464-residue protein sequence, read N- to C-terminus: PH domain-containing rcdII (464 aa).

Residues 8–210 (KSSKEIIEDL…NTKLMSNLEI (203 aa)) adopt a coiled-coil conformation. 2 disordered regions span residues 215–290 (NFNN…NSSG) and 317–347 (CNNNNNNNNGNSKLSTGVPITRSRSSSSNSN). Low complexity-rich tracts occupy residues 234-288 (STTT…SSNS), 317-328 (CNNNNNNNNGNS), and 338-347 (RSRSSSSNSN). The 109-residue stretch at 353-461 (KIVKEGWLKR…WKDTISSLMP (109 aa)) folds into the PH domain.

This is PH domain-containing rcdII (rcdII) from Dictyostelium discoideum (Social amoeba).